The chain runs to 624 residues: Galactan 5-O-arabinofuranosyltransferase (624 aa).

13 helical membrane-spanning segments follow: residues 5–25 (VLGQ…VAIA), 43–63 (ALTT…GLLW), 73–93 (LGAL…PLGA), 127–147 (IGLP…IAAA), 159–179 (WSIV…AAMI), 181–201 (FEYA…YAST), 203–223 (PYAA…WAGL), 234–254 (AIVG…LLLV), 280–300 (LAVI…PYLL), 326–346 (FPMF…VWLV), 355–375 (AGAL…SMLT), 391–411 (LTVL…LAIA), and 422–442 (VVAA…QDIP).

It belongs to the glycosyltransferase 85 family.

Its subcellular location is the cell membrane. The enzyme catalyses Adds an alpha-D-arabinofuranosyl group from trans,octacis-decaprenylphospho-beta-D-arabinofuranose at the 5-O-position of the eighth, tenth and twelfth galactofuranose unit of the galactofuranan chain of [beta-D-galactofuranosyl-(1-&gt;5)-beta-D-galactofuranosyl-(1-&gt;6)]14-beta-D-galactofuranosyl-(1-&gt;5)-beta-D-galactofuranosyl-(1-&gt;4)-alpha-L-rhamnopyranosyl-(1-&gt;3)-N-acetyl-alpha-D-glucosaminyl-diphospho-trans,octacis-decaprenol.. The protein operates within cell wall biogenesis; cell wall polysaccharide biosynthesis. In terms of biological role, involved in the biosynthesis of the arabinogalactan (AG) region of the mycolylarabinogalactan-peptidoglycan (mAGP) complex, an essential component of the mycobacterial cell wall. Catalyzes the addition of the first key arabinofuranosyl (Araf) residue from the sugar donor decaprenyl-phospho-arabinose (DPA) on the C-5 of a 6-linked galactofuranosyl (Galf) of the galactan domain, thus 'priming' the galactan for further elaboration by other arabinofuranosyltransferases. It is not able to add an Araf residue to a terminal Galf. The sequence is that of Galactan 5-O-arabinofuranosyltransferase from Mycolicibacterium smegmatis (strain ATCC 700084 / mc(2)155) (Mycobacterium smegmatis).